Reading from the N-terminus, the 421-residue chain is Dihydroorotase (421 aa).

Residues histidine 59 and histidine 61 each contribute to the Zn(2+) site. Substrate-binding positions include 61–63 (HLR) and asparagine 93. The Zn(2+) site is built by aspartate 150, histidine 177, and histidine 230. Asparagine 276 is a substrate binding site. Aspartate 303 is a Zn(2+) binding site. The active site involves aspartate 303. Histidine 307 is a binding site for substrate.

The protein belongs to the metallo-dependent hydrolases superfamily. DHOase family. Class I DHOase subfamily. Requires Zn(2+) as cofactor.

The enzyme catalyses (S)-dihydroorotate + H2O = N-carbamoyl-L-aspartate + H(+). It functions in the pathway pyrimidine metabolism; UMP biosynthesis via de novo pathway; (S)-dihydroorotate from bicarbonate: step 3/3. Its function is as follows. Catalyzes the reversible cyclization of carbamoyl aspartate to dihydroorotate. The protein is Dihydroorotase of Desulfotalea psychrophila (strain LSv54 / DSM 12343).